The sequence spans 212 residues: Probable nicotinate-nucleotide adenylyltransferase (212 aa).

This sequence belongs to the NadD family.

It catalyses the reaction nicotinate beta-D-ribonucleotide + ATP + H(+) = deamido-NAD(+) + diphosphate. The protein operates within cofactor biosynthesis; NAD(+) biosynthesis; deamido-NAD(+) from nicotinate D-ribonucleotide: step 1/1. Its function is as follows. Catalyzes the reversible adenylation of nicotinate mononucleotide (NaMN) to nicotinic acid adenine dinucleotide (NaAD). The polypeptide is Probable nicotinate-nucleotide adenylyltransferase (Shewanella sp. (strain ANA-3)).